We begin with the raw amino-acid sequence, 494 residues long: Neuronal acetylcholine receptor subunit alpha-6 (494 aa).

The N-terminal stretch at 1-30 (MLNSRDQGNLHSGLCLWLCGFLALFKGSTG) is a signal peptide. The Extracellular segment spans residues 31–240 (CESEEQLFHR…TYSFYIRRLP (210 aa)). N-linked (GlcNAc...) asparagine glycans are attached at residues N54 and N171. 2 disulfide bridges follow: C158–C172 and C222–C223. 3 consecutive transmembrane segments (helical) span residues 241 to 265 (MFYTINLIIPCLFISFLTVLVFYLP), 272 to 290 (VTLCISVLLSLTVFLLVIT), and 306 to 327 (YLLFTMIFVTLSIVVTVFVLNI). Over 328–465 (HYRTPATHTM…WKYMAMVVDR (138 aa)) the chain is Cytoplasmic. The segment at 399 to 423 (QKSSDIAPGKRRSSQQPARWVAENS) is disordered. Position 401 is a phosphoserine (S401). The chain crosses the membrane as a helical span at residues 466-485 (VFLWVFIIVCVFGTVGLFLQ).

It belongs to the ligand-gated ion channel (TC 1.A.9) family. Acetylcholine receptor (TC 1.A.9.1) subfamily. Alpha-6/CHRNA6 sub-subfamily. As to quaternary structure, neuronal AChR is composed of two different types of subunits: alpha and non-alpha (beta). CHRNA6/alpha-6 subunit can be combined to CHRNB2/beta-2 and CHRNA4/alpha-4 to give rise to functional receptors. Interacts with LYPD6. Predominantly expressed in only a few brain areas, including dopaminergic neurons, norepirephrine neurons and cells of the visual system.

It is found in the synaptic cell membrane. The enzyme catalyses K(+)(in) = K(+)(out). It carries out the reaction Na(+)(in) = Na(+)(out). The catalysed reaction is Ca(2+)(in) = Ca(2+)(out). With respect to regulation, activated by a myriad of ligands such as acetylcholine, cytisine and nicotine. CHRNA6 nAChR activity is inhibited by the antagonists alpha-conotoxin MII and PIA, a small disulfide-constrained peptides from cone snails. Functionally, component of neuronal acetylcholine receptors (nAChRs) that function as pentameric, ligand-gated cation channels with high calcium permeability among other activities. nAChRs are excitatory neurotrasnmitter receptors formed by a collection of nAChR subunits known to mediate synaptic transmission in the nervous system and the neuromuscular junction. Each nAchR subunit confers differential attributes to channel properties, including activation, deactivation and desensitization kinetics, pH sensitivity, cation permeability, and binding to allosteric modulators. CHRNA6 forms pentameric channels with CHRNB2 and CHRNA4 that exhibit high sensitivity to ACh and nicotine and are predominantly expressed in only a few brain areas, including dopaminergic neurons, norepirephrine neurons and cells of the visual system. nAChrs containing CHRNA6 subunits mediate endogenous cholinergic modulation of dopamine and gamma-aminobutyric acid (GABA) release in response to nicotine at nerve terminals. This chain is Neuronal acetylcholine receptor subunit alpha-6 (Chrna6), found in Mus musculus (Mouse).